The chain runs to 248 residues: Flavodoxin/ferredoxin--NADP reductase (248 aa).

The region spanning 2–101 is the FAD-binding FR-type domain; sequence ADWVTGKVTK…SEAAGFFVLD (100 aa). Residues 50-53, Tyr66, 74-76, and Thr116 contribute to the FAD site; these read RAYS and KLS. NADP(+) contacts are provided by residues 143–144, 173–174, Arg184, 214–216, and Asp220; these read AR, SR, and NPQ. 247 to 248 is a binding site for FAD; sequence YW.

This sequence belongs to the ferredoxin--NADP reductase type 1 family. FAD serves as cofactor.

The protein resides in the cytoplasm. The enzyme catalyses 2 reduced [2Fe-2S]-[ferredoxin] + NADP(+) + H(+) = 2 oxidized [2Fe-2S]-[ferredoxin] + NADPH. It carries out the reaction reduced [flavodoxin] + NADP(+) = oxidized [flavodoxin] + NADPH + 2 H(+). Functionally, transports electrons between flavodoxin or ferredoxin and NADPH. The chain is Flavodoxin/ferredoxin--NADP reductase (fpr) from Shigella flexneri.